A 144-amino-acid polypeptide reads, in one-letter code: 6-pyruvoyl tetrahydrobiopterin synthase (144 aa).

At Ser-18 the chain carries Phosphoserine. His-23 lines the Zn(2+) pocket. Ser-27 carries the phosphoserine modification. Cys-42 acts as the Proton acceptor in catalysis. Residues His-48 and His-50 each coordinate Zn(2+). The active-site Charge relay system is His-89. Tyr-127 bears the Phosphotyrosine mark. Catalysis depends on Glu-133, which acts as the Charge relay system.

Belongs to the PTPS family. Homodimer. Homohexamer formed of two homotrimers in a head to head fashion. It depends on Zn(2+) as a cofactor. In terms of processing, phosphorylation of Ser-18 is required for maximal enzyme activity.

The catalysed reaction is 7,8-dihydroneopterin 3'-triphosphate = 6-pyruvoyl-5,6,7,8-tetrahydropterin + triphosphate + H(+). Its pathway is cofactor biosynthesis; tetrahydrobiopterin biosynthesis; tetrahydrobiopterin from 7,8-dihydroneopterin triphosphate: step 1/3. Functionally, involved in the biosynthesis of tetrahydrobiopterin, an essential cofactor of aromatic amino acid hydroxylases. Catalyzes the transformation of 7,8-dihydroneopterin triphosphate into 6-pyruvoyl tetrahydropterin. This is 6-pyruvoyl tetrahydrobiopterin synthase from Mus musculus (Mouse).